The following is a 154-amino-acid chain: Probable archaeosortase D (154 aa).

The next 4 helical transmembrane spans lie at 6–26 (AIYI…LKML), 57–77 (IIEI…LGYI), 91–111 (YSVF…ILII), and 125–145 (VISF…IYLL). C64 functions as the Acyl-thioester intermediate in the catalytic mechanism. Catalysis depends on R106, which acts as the Proton donor.

This sequence belongs to the exosortase/archaeosortase family. Archaeosortase D subfamily.

Its subcellular location is the cell membrane. Its function is as follows. Transpeptidase that recognizes and modifies its substrate by proteolytic cleavage of a sorting signal. Following cleavage, a covalent intermediate is formed via a thioester bond between the archaeosortase and its substrate, which is then transferred and covalently attached to the cell membrane. This Methanocaldococcus jannaschii (strain ATCC 43067 / DSM 2661 / JAL-1 / JCM 10045 / NBRC 100440) (Methanococcus jannaschii) protein is Probable archaeosortase D.